The following is a 432-amino-acid chain: Solute carrier family 35 member F5 (432 aa).

The N-terminal stretch at 1 to 33 (MFLPSTTNHSSAPLQKHLCLFCTFWALLFGSHG) is a signal peptide. Serine 116 is subject to Phosphoserine. 8 consecutive transmembrane segments (helical) span residues 152–172 (ISFFFCFVWFLANLSYQEALS), 177–197 (AIVNILSSTSGLFTLILAAVF), 205–225 (FTLSKLLAVILSIGGVVLVNL), 236–256 (TIGSIWSLAGAMLYAVYIVMI), 270–290 (MFFGFVGLFNLLLLWPGFFLL), 304–324 (VVLMCIIINGLIGTVLSEFLW), 329–349 (FLTSSLIGTLALSLTIPLSII), and 361–381 (WLFFAGAIPVFFSFFIVTLLC). Residues 161–225 (FLANLSYQEA…SIGGVVLVNL (65 aa)) form the EamA domain.

This sequence belongs to the SLC35F solute transporter family.

The protein localises to the membrane. Functionally, putative solute transporter. The polypeptide is Solute carrier family 35 member F5 (SLC35F5) (Macaca fascicularis (Crab-eating macaque)).